We begin with the raw amino-acid sequence, 280 residues long: Golgi phosphoprotein 3-like A (280 aa).

The tract at residues 1-32 (MTTLIRRGRRAEEGQERRADSEDSIKDKDEEE) is disordered. A compositionally biased stretch (basic and acidic residues) spans 10–32 (RAEEGQERRADSEDSIKDKDEEE). W62, R71, R152, and R155 together coordinate a 1,2-diacyl-sn-glycero-3-phospho-(1D-myo-inositol 4-phosphate). The interval 171–182 (EKQNFLLFDMTT) is beta-hairpin required for oligomerization.

The protein belongs to the GOLPH3/VPS74 family. Homooligomer.

It is found in the golgi apparatus. It localises to the golgi stack membrane. Its subcellular location is the trans-Golgi network membrane. Functionally, phosphatidylinositol-4-phosphate-binding protein that may play a role in the process of vesicle budding at the Golgi and anterograde transport to the plasma membrane. The chain is Golgi phosphoprotein 3-like A (golph3l-a) from Xenopus laevis (African clawed frog).